We begin with the raw amino-acid sequence, 413 residues long: Histidine decarboxylase (413 aa).

Residue His-129 coordinates substrate. The residue at position 242 (Lys-242) is an N6-(pyridoxal phosphate)lysine.

This sequence belongs to the group II decarboxylase family. It depends on pyridoxal 5'-phosphate as a cofactor. As to expression, ripe fruits; not detected in leaves and unripe fruit.

It catalyses the reaction L-histidine + H(+) = histamine + CO2. The polypeptide is Histidine decarboxylase (HDC) (Solanum lycopersicum (Tomato)).